A 247-amino-acid chain; its full sequence is 5-hydroxytryptamine receptor 2A (247 aa).

K1 is a topological domain (extracellular). The chain crosses the membrane as a helical span at residues 2 to 26 (LCAIWIYLDVLFSTASIMHLCAISL). C3 and C82 are disulfide-bonded. D10 lines the serotonin pocket. The DRY motif; important for ligand-induced conformation changes motif lies at 27–29 (DRY). Over 27–46 (DRYVAIQNPIHHSRFNSRTK) the chain is Cytoplasmic. The helical transmembrane segment at 47–70 (AFLKIIAVWTISVGISMPVPVFGL) threads the bilayer. The Extracellular portion of the chain corresponds to 71-87 (QDDSKVFKEGSCLLADD). Residues 88–113 (NFVLIGSFVAFFIPLTIMVITYFLTI) form a helical membrane-spanning segment. Residues 114-177 (KSLQKEATLC…QSISNEQKAC (64 aa)) are Cytoplasmic-facing. S135 is subject to Phosphoserine. A helical membrane pass occupies residues 178–203 (KVLGIVFFLFVVMWCPFFVTNIMAVI). A serotonin-binding site is contributed by N198. Residues C204 and C208 are joined by a disulfide bond. Residues 204 to 211 (CKESCNED) are Extracellular-facing. The helical transmembrane segment at 212-237 (VIGALLNVFVWIGYLSSAVNPLVYTL) threads the bilayer. Positions 231–235 (NPLVY) match the NPxxY motif; important for ligand-induced conformation changes and signaling motif. The Cytoplasmic portion of the chain corresponds to 238-247 (FNKTYRSAFA).

This sequence belongs to the G-protein coupled receptor 1 family. As to quaternary structure, interacts (via C-terminus) with MPDZ and PATJ. May interact (via C-terminus) with MPP3, PRDX6, DLG4, DLG1, CASK, APBA1 and MAGI2. Interacts with GRM2 and DRD2; this may affect signaling. As to expression, detected in adult intestine, especially in mucosal epithelium, longitudinal and circular layers of muscularis externa and myenteric plexuses. Highly expressed in Paneth cells, and detected at lower levels in enterocytes (at protein level).

It is found in the cell membrane. The protein localises to the cell projection. It localises to the dendrite. The protein resides in the axon. Its subcellular location is the cytoplasmic vesicle. It is found in the membrane. The protein localises to the caveola. It localises to the presynapse. Its activity is regulated as follows. G-protein coupled receptor activity is regulated by lipids: oleamide increases HTR2A-mediated activity. In terms of biological role, G-protein coupled receptor for 5-hydroxytryptamine (serotonin). Also functions as a receptor for various drugs and psychoactive substances, including mescaline, psilocybin, 1-(2,5-dimethoxy-4-iodophenyl)-2-aminopropane (DOI) and lysergic acid diethylamide (LSD). Ligand binding causes a conformation change that triggers signaling via guanine nucleotide-binding proteins (G proteins) and modulates the activity of downstream effectors. HTR2A is coupled to G(q)/G(11) G alpha proteins and activates phospholipase C-beta, releasing diacylglycerol (DAG) and inositol 1,4,5-trisphosphate (IP3) second messengers that modulate the activity of phosphatidylinositol 3-kinase and promote the release of Ca(2+) ions from intracellular stores, respectively. Beta-arrestin family members inhibit signaling via G proteins and mediate activation of alternative signaling pathways. Affects neural activity, perception, cognition and mood. Plays a role in the regulation of behavior, including responses to anxiogenic situations and psychoactive substances. Plays a role in intestinal smooth muscle contraction, and may play a role in arterial vasoconstriction. The sequence is that of 5-hydroxytryptamine receptor 2A (HTR2A) from Cavia porcellus (Guinea pig).